The chain runs to 218 residues: Probable GTP-binding protein EngB (218 aa).

One can recognise an EngB-type G domain in the interval 23 to 200; sequence EVPEIAFVGR…AQLLWQWAHP (178 aa). Residues 31–38, 58–62, 80–83, 150–153, and 179–181 contribute to the GTP site; these read GRSNAGKS, GRTQH, DLPG, TKAD, and FSA. Ser38 and Thr60 together coordinate Mg(2+).

This sequence belongs to the TRAFAC class TrmE-Era-EngA-EngB-Septin-like GTPase superfamily. EngB GTPase family. Requires Mg(2+) as cofactor.

In terms of biological role, necessary for normal cell division and for the maintenance of normal septation. This Acidovorax ebreus (strain TPSY) (Diaphorobacter sp. (strain TPSY)) protein is Probable GTP-binding protein EngB.